Reading from the N-terminus, the 943-residue chain is MTDYKATLNLPDTAFPMKAGLPQREPQILQRWDSIGLYQKLREIGKDRPKFVLHDGPPYANGKIHIGHALNKILKDMIVRSKTLAGFDAPYVPGWDCHGLPIEHKVEVTHGKHLSADRTRELCREYAAEQIEGQKTEFIRLGVLGDWDNPYKTMNFANEAGEIRALAEMVKQGFVFKGLKPVNWCFDCGSALAEAEVEYADKKSQTIDVAFPVADETKLAAAFGLASLAKPAAIVIWTTTPWTIPANQALNIHPEFKYALVDTGERLLVLAEELVESCLKRYNLEGSIIATAQGSALELINFRHPFYDRLSPIYLADYVELGAGTGVVHSAPAYGEDDFVTCKRYGMVNDDILTPVQSNGVYVESLPFFGGQFIWKANPAIVEKLSEVGALMHTETISHSYMHCWRHKTPLIYRATAQWFVGMDKQPTTGEPLRERALKAIEDTKFVPAWGQARLHSMIANRPDWCISRQRNWGVPIPFFLHKQTGELHPRTVELMEQVAKRVEQEGIEAWFKLDAAELLGVEADQYDKITDTLDVWFDSGTTHWHVLRGSHDIGHTTGPVADLYLEGSDQHRGWFHSSLLTGCAIDNHAPYRELLTHGFTVDENGRKMSKSLGNTIEPEKVNNTLGADILRLWVSATDYSGEMAVSEQILQRSADAYRRIRNTARFLLSNLSGFDPARDLLAPEDMLALDRWAVDRTLLLQRELEEHYSEYRFWNVYSKVHNFCVQELGGFYLDIIKDRQYTTGANSVARRSCQTALYHISEALVRWIAPILAFTADEIWQYLPGERNESVMLNGWYQGLSELPEGTELDRAYWDRVMAVKASVNKELENQRTAKVIGGNLQAEVTLYADEGLSADLGKLGDELRFVLITSAASVVPFAQAPAEAVATEVEGLKLKVVKSGHAKCGRCWHFRADVGSHPEHPEICSRCVDNLSGSGEVRHYA.

The 'HIGH' region signature appears at 58–68; it reads PYANGKIHIGH. E567 contributes to the L-isoleucyl-5'-AMP binding site. A 'KMSKS' region motif is present at residues 608–612; it reads KMSKS. Residue K611 participates in ATP binding. Zn(2+)-binding residues include C906, C909, C926, and C929.

This sequence belongs to the class-I aminoacyl-tRNA synthetase family. IleS type 1 subfamily. Monomer. Zn(2+) is required as a cofactor.

The protein resides in the cytoplasm. The catalysed reaction is tRNA(Ile) + L-isoleucine + ATP = L-isoleucyl-tRNA(Ile) + AMP + diphosphate. In terms of biological role, catalyzes the attachment of isoleucine to tRNA(Ile). As IleRS can inadvertently accommodate and process structurally similar amino acids such as valine, to avoid such errors it has two additional distinct tRNA(Ile)-dependent editing activities. One activity is designated as 'pretransfer' editing and involves the hydrolysis of activated Val-AMP. The other activity is designated 'posttransfer' editing and involves deacylation of mischarged Val-tRNA(Ile). The sequence is that of Isoleucine--tRNA ligase from Pseudomonas putida (strain GB-1).